The following is a 308-amino-acid chain: Protoheme IX farnesyltransferase (308 aa).

A run of 8 helical transmembrane segments spans residues 31–51, 53–73, 102–122, 124–144, 149–169, 170–190, 240–260, and 288–308; these read VIEL…RGTV, PLLI…ANAL, NALV…WWTT, LLSG…YTLL, TSQN…IGWS, AVTG…FFWT, LALA…VWFL, and YLAV…PHLF.

This sequence belongs to the UbiA prenyltransferase family. Protoheme IX farnesyltransferase subfamily.

The protein localises to the cell membrane. The enzyme catalyses heme b + (2E,6E)-farnesyl diphosphate + H2O = Fe(II)-heme o + diphosphate. It functions in the pathway porphyrin-containing compound metabolism; heme O biosynthesis; heme O from protoheme: step 1/1. In terms of biological role, converts heme B (protoheme IX) to heme O by substitution of the vinyl group on carbon 2 of heme B porphyrin ring with a hydroxyethyl farnesyl side group. This Mycobacterium avium (strain 104) protein is Protoheme IX farnesyltransferase.